Reading from the N-terminus, the 240-residue chain is 2,3-bisphosphoglycerate-dependent phosphoglycerate mutase (240 aa).

Substrate-binding positions include 5–12 (RHGESVWN), 18–19 (TG), R57, 84–87 (ERHY), K95, 111–112 (RR), and 180–181 (GN). H6 serves as the catalytic Tele-phosphohistidine intermediate. Catalysis depends on E84, which acts as the Proton donor/acceptor.

It belongs to the phosphoglycerate mutase family. BPG-dependent PGAM subfamily. As to quaternary structure, homodimer.

It catalyses the reaction (2R)-2-phosphoglycerate = (2R)-3-phosphoglycerate. Its pathway is carbohydrate degradation; glycolysis; pyruvate from D-glyceraldehyde 3-phosphate: step 3/5. Its function is as follows. Catalyzes the interconversion of 2-phosphoglycerate and 3-phosphoglycerate. This chain is 2,3-bisphosphoglycerate-dependent phosphoglycerate mutase, found in Nitrosococcus oceani (strain ATCC 19707 / BCRC 17464 / JCM 30415 / NCIMB 11848 / C-107).